The chain runs to 193 residues: dCTP deaminase (193 aa).

Residues 110–115, Asp128, 136–138, Tyr171, Lys178, and Gln182 contribute to the dCTP site; these read RSSLAR and VLE. Residue Glu138 is the Proton donor/acceptor of the active site. The disordered stretch occupies residues 174 to 193; it reads RKNAKYKDQQEAVASRISQD.

The protein belongs to the dCTP deaminase family. In terms of assembly, homotrimer.

It catalyses the reaction dCTP + H2O + H(+) = dUTP + NH4(+). The protein operates within pyrimidine metabolism; dUMP biosynthesis; dUMP from dCTP (dUTP route): step 1/2. Functionally, catalyzes the deamination of dCTP to dUTP. The polypeptide is dCTP deaminase (Shewanella sp. (strain W3-18-1)).